Consider the following 65-residue polypeptide: Muscarinic toxin-like protein 1 (65 aa).

4 disulfides stabilise this stretch: Cys3–Cys24, Cys17–Cys42, Cys46–Cys57, and Cys58–Cys63.

It belongs to the three-finger toxin family. Short-chain subfamily. Type C muscarinic toxin sub-subfamily. In terms of assembly, monomer. Expressed by the venom gland.

Its subcellular location is the secreted. Its function is as follows. Binds weakly to the muscarinic acetylcholine receptor (CHRM). This is Muscarinic toxin-like protein 1 from Naja kaouthia (Monocled cobra).